Consider the following 744-residue polypeptide: CCR4-NOT transcription complex subunit 10 (744 aa).

Residues 1–16 (MAADKPADQGAEKHEG) show a composition bias toward basic and acidic residues. A disordered region spans residues 1-25 (MAADKPADQGAEKHEGTGQSSGITD). Ala2 is subject to N-acetylalanine. A coiled-coil region spans residues 74–107 (KSNQTTTDNLRQTLNQLKNQVHSAVEEMDGLDDV). The span at 183–199 (NNNKNGKNETGNNNNKD) shows a compositional bias: low complexity. Disordered regions lie at residues 183-204 (NNNK…SNHK), 477-521 (QDPK…PPSS), and 602-634 (VSLG…PQCY). The segment covering 484–495 (GAKNSNQLGGNT) has biased composition (polar residues). The segment covering 496–506 (ESSESSETCSS) has biased composition (low complexity). Positions 602–612 (VSLGISSNEQD) are enriched in polar residues.

It belongs to the CNOT10 family. In terms of assembly, component of the CCR4-NOT complex; distinct complexes seem to exist that differ in the participation of probably mutually exclusive catalytic subunits. CNOT10 and CNOT11 form a subcomplex docked to the CNOT1 scaffold.

Its subcellular location is the cytoplasm. The protein resides in the nucleus. Functionally, component of the CCR4-NOT complex which is one of the major cellular mRNA deadenylases and is linked to various cellular processes including bulk mRNA degradation, miRNA-mediated repression, translational repression during translational initiation and general transcription regulation. Additional complex functions may be a consequence of its influence on mRNA expression. Is not required for association of CNOT7 to the CCR4-NOT complex. This Macaca fascicularis (Crab-eating macaque) protein is CCR4-NOT transcription complex subunit 10 (CNOT10).